We begin with the raw amino-acid sequence, 196 residues long: MADS-box transcription factor 32 (196 aa).

In terms of domain architecture, MADS-box spans 1–61 (MGRGRSEIKR…GKLYHFLSPT (61 aa)). One can recognise a K-box domain in the interval 85–175 (RQERRAELEK…CDKIAHAQTL (91 aa)).

Its subcellular location is the nucleus. Probable transcription factor. The chain is MADS-box transcription factor 32 (MADS32) from Oryza sativa subsp. japonica (Rice).